A 1452-amino-acid chain; its full sequence is Pleiotropic drug resistance protein 1 (1452 aa).

The ABC transporter 1 domain occupies 152-425 (LNYLHILPNR…FEYMGFICPE (274 aa)). 185–192 (GPPSSGKT) contacts ATP. One can recognise an ABC transmembrane type-2 1 domain in the interval 504–716 (LLKACTAREY…AQNAIAVNEF (213 aa)). The next 7 helical transmembrane spans lie at 521-541 (FVYIFKMIQLTLMASITMTLF), 554-574 (GAVFLGALFYALIMIMFNGFS), 609-629 (IPITLVEVAIWVCMTYYVIGF), 640-660 (LLLLICVNQMASGLFRLMGAL), 664-684 (IIVANTFGSFVLLTVLVMGGF), 694-714 (WWIWGYWISPMMYAQNAIAVN), and 753-773 (IGAGALIGYVFLFNFLFAVAL). The interval 808 to 830 (LGKSSSEKGNDVRRSASSRSMSS) is disordered. Positions 812–821 (SSEKGNDVRR) are enriched in basic and acidic residues. Positions 855 to 1107 (ITFDDIRYAV…HLIKYFEGID (253 aa)) constitute an ABC transporter 2 domain. Residue 900 to 907 (GVSGAGKT) coordinates ATP. Residues 1180-1394 (TQCMACFWKQ…TLYGLIASQF (215 aa)) enclose the ABC transmembrane type-2 2 domain. Helical transmembrane passes span 1199-1219 (YTAVRIMFTFFIALMFGTIFW), 1239-1259 (YIAVLFLGVQNATTVQPVIAI), 1287-1307 (LPYLFLQTIIYGVIVYAMIGF), 1314-1334 (FFWYLFFMYFTLLYFTLYGMM), 1344-1364 (IAAIISSAFYAVWNLFCGFIV), 1375-1395 (WYYYICPISWTLYGLIASQFG), and 1421-1441 (FVGYVALILVGISVLFLFIFA).

The protein belongs to the ABC transporter superfamily. ABCG family. PDR (TC 3.A.1.205) subfamily. In terms of tissue distribution, expressed in root hypodermal passage cells. Expressed in stem tissues, particularly the vasculature and nodes adjacent to leaf axils.

It localises to the cell membrane. Cellular strigolactone (SL) transporter required for the exudation of SL from the root to the soil. The presence of SL in the vicinity of the roots is required for development of symbiotic interactions with arbuscular mycorrhizal fungi (AMF). Transports SL in the above ground tissues and is required for the control of shoot branching. SL regulates plant shoot architecture by inhibiting the outgrowth of axillary buds. Involved in the regulation of shootward and outward directional strigolactone transport in roots. Due to its polar localization in root cells, mediates directional shootward strigolactone transport, as well as localized outward directional transport for exudation to the soil. This chain is Pleiotropic drug resistance protein 1, found in Petunia hybrida (Petunia).